The sequence spans 408 residues: Peptidase T (408 aa).

Histidine 78 provides a ligand contact to Zn(2+). The active site involves aspartate 80. Position 140 (aspartate 140) interacts with Zn(2+). The active-site Proton acceptor is glutamate 173. Positions 174, 196, and 379 each coordinate Zn(2+).

Belongs to the peptidase M20B family. Zn(2+) serves as cofactor.

Its subcellular location is the cytoplasm. The catalysed reaction is Release of the N-terminal residue from a tripeptide.. In terms of biological role, cleaves the N-terminal amino acid of tripeptides. The polypeptide is Peptidase T (Escherichia coli O9:H4 (strain HS)).